The chain runs to 353 residues: Pleckstrin-2 (353 aa).

An N-acetylmethionine modification is found at Met-1. In terms of domain architecture, PH 1 spans 4–104 (GVLKEGFLVK…WAFEITGAIH (101 aa)). The residue at position 120 (Ser-120) is a Phosphoserine. Residues 139–225 (SNTGIRSSPN…DSTALYTFAE (87 aa)) form the DEP domain. In terms of domain architecture, PH 2 spans 247-353 (TVVKQGYLAK…EWIEAIKKLT (107 aa)).

Its subcellular location is the cell projection. The protein resides in the lamellipodium membrane. The protein localises to the cytoplasm. It localises to the cytoskeleton. May help orchestrate cytoskeletal arrangement. Contribute to lamellipodia formation. The chain is Pleckstrin-2 (PLEK2) from Homo sapiens (Human).